Consider the following 176-residue polypeptide: Peptide methionine sulfoxide reductase MsrA (176 aa).

The active site involves Cys-10.

This sequence belongs to the MsrA Met sulfoxide reductase family.

It carries out the reaction L-methionyl-[protein] + [thioredoxin]-disulfide + H2O = L-methionyl-(S)-S-oxide-[protein] + [thioredoxin]-dithiol. It catalyses the reaction [thioredoxin]-disulfide + L-methionine + H2O = L-methionine (S)-S-oxide + [thioredoxin]-dithiol. Has an important function as a repair enzyme for proteins that have been inactivated by oxidation. Catalyzes the reversible oxidation-reduction of methionine sulfoxide in proteins to methionine. The chain is Peptide methionine sulfoxide reductase MsrA from Chromobacterium violaceum (strain ATCC 12472 / DSM 30191 / JCM 1249 / CCUG 213 / NBRC 12614 / NCIMB 9131 / NCTC 9757 / MK).